Reading from the N-terminus, the 489-residue chain is Bypass of stop codon protein 5 (489 aa).

A disordered region spans residues 1–42 (MQESKEPQNKFEGCQRISSSSSTLFGGTSFEEPRCGTSQGKE). Over residues 18-30 (SSSSSTLFGGTSF) the composition is skewed to low complexity. 2 positions are modified to phosphoserine: serine 111 and serine 350.

This sequence belongs to the BUL1 family.

In terms of biological role, appears to play a role in translation fidelity, and may act when translation is compromised. May be a component of the ubiquitination pathway. The chain is Bypass of stop codon protein 5 (BSC5) from Saccharomyces cerevisiae (strain ATCC 204508 / S288c) (Baker's yeast).